The sequence spans 173 residues: Ribulose bisphosphate carboxylase small subunit, chloroplastic 3 (173 aa).

The N-terminal 49 residues, 1-49 (MASIPATVATVAQANMVAPFTGLKSNAAFPVTKKVNDFSTLPSNGGRVQ), are a transit peptide targeting the chloroplast.

It belongs to the RuBisCO small chain family. In terms of assembly, heterohexadecamer of 8 large and 8 small subunits.

The protein resides in the plastid. It is found in the chloroplast. Functionally, ruBisCO catalyzes two reactions: the carboxylation of D-ribulose 1,5-bisphosphate, the primary event in carbon dioxide fixation, as well as the oxidative fragmentation of the pentose substrate. Both reactions occur simultaneously and in competition at the same active site. Although the small subunit is not catalytic it is essential for maximal activity. This Flaveria pringlei protein is Ribulose bisphosphate carboxylase small subunit, chloroplastic 3.